Here is a 356-residue protein sequence, read N- to C-terminus: Phospho-N-acetylmuramoyl-pentapeptide-transferase (356 aa).

Helical transmembrane passes span 27-47 (AAVA…ILML), 73-93 (TMGG…WMDL), 97-117 (FVWA…LDDY), 134-154 (LLVE…RTGT), 163-183 (GIVI…IVGF), 195-215 (GLAT…VYLS), 232-252 (AGEL…FLWF), 258-278 (AVFM…TIAV), 285-305 (VLVL…IQVF), and 333-353 (TVVI…LATL).

The protein belongs to the glycosyltransferase 4 family. MraY subfamily. The cofactor is Mg(2+).

Its subcellular location is the cell inner membrane. The catalysed reaction is UDP-N-acetyl-alpha-D-muramoyl-L-alanyl-gamma-D-glutamyl-meso-2,6-diaminopimeloyl-D-alanyl-D-alanine + di-trans,octa-cis-undecaprenyl phosphate = di-trans,octa-cis-undecaprenyl diphospho-N-acetyl-alpha-D-muramoyl-L-alanyl-D-glutamyl-meso-2,6-diaminopimeloyl-D-alanyl-D-alanine + UMP. Its pathway is cell wall biogenesis; peptidoglycan biosynthesis. Its function is as follows. Catalyzes the initial step of the lipid cycle reactions in the biosynthesis of the cell wall peptidoglycan: transfers peptidoglycan precursor phospho-MurNAc-pentapeptide from UDP-MurNAc-pentapeptide onto the lipid carrier undecaprenyl phosphate, yielding undecaprenyl-pyrophosphoryl-MurNAc-pentapeptide, known as lipid I. The protein is Phospho-N-acetylmuramoyl-pentapeptide-transferase of Sphingopyxis alaskensis (strain DSM 13593 / LMG 18877 / RB2256) (Sphingomonas alaskensis).